Consider the following 333-residue polypeptide: DNA-directed RNA polymerase subunit alpha (333 aa).

Residues 1-234 (MQSSVNEFLT…QQLAAFVDLK (234 aa)) are alpha N-terminal domain (alpha-NTD). An alpha C-terminal domain (alpha-CTD) region spans residues 248 to 333 (IDPILLRPVD…SLKKDDKATA (86 aa)).

Belongs to the RNA polymerase alpha chain family. As to quaternary structure, homodimer. The RNAP catalytic core consists of 2 alpha, 1 beta, 1 beta' and 1 omega subunit. When a sigma factor is associated with the core the holoenzyme is formed, which can initiate transcription.

The enzyme catalyses RNA(n) + a ribonucleoside 5'-triphosphate = RNA(n+1) + diphosphate. In terms of biological role, DNA-dependent RNA polymerase catalyzes the transcription of DNA into RNA using the four ribonucleoside triphosphates as substrates. This Pseudomonas putida (Arthrobacter siderocapsulatus) protein is DNA-directed RNA polymerase subunit alpha.